The chain runs to 455 residues: Bleomycin hydrolase (455 aa).

Residues cysteine 73, histidine 372, and asparagine 396 contribute to the active site.

Belongs to the peptidase C1 family. In terms of assembly, homooctamer.

The protein resides in the cytoplasm. The catalysed reaction is Inactivates bleomycin B2 (a cytotoxic glycometallopeptide) by hydrolysis of a carboxyamide bond of beta-aminoalanine, but also shows general aminopeptidase activity. The specificity varies somewhat with source, but amino acid arylamides of Met, Leu and Ala are preferred.. Its function is as follows. The normal physiological role of BLM hydrolase is unknown, but it catalyzes the inactivation of the antitumor drug BLM (a glycopeptide) by hydrolyzing the carboxamide bond of its B-aminoalaninamide moiety thus protecting normal and malignant cells from BLM toxicity. The sequence is that of Bleomycin hydrolase (BLMH) from Gallus gallus (Chicken).